Here is a 103-residue protein sequence, read N- to C-terminus: Protein translation factor SUI1 homolog (103 aa).

This sequence belongs to the SUI1 family.

The polypeptide is Protein translation factor SUI1 homolog (Methanocaldococcus jannaschii (strain ATCC 43067 / DSM 2661 / JAL-1 / JCM 10045 / NBRC 100440) (Methanococcus jannaschii)).